The sequence spans 47 residues: Potamin-1 (47 aa).

3 disulfide bridges follow: C3–C40, C6–C24, and C7–C36.

Its function is as follows. Inhibitor of serine proteases chymotrypsin, papain and trypsin. Has strong antifungal activity against C.albicans and R.solani. Has antibacterial activity against the Gram-positive bacterium C.michiganense, but lacks antibacterial activity against the Gram-positive bacterium S.aureus. Lacks hemolytic activity against human erythrocytes. The polypeptide is Potamin-1 (Solanum tuberosum (Potato)).